A 310-amino-acid polypeptide reads, in one-letter code: N-acetylmuramic acid 6-phosphate etherase (310 aa).

An SIS domain is found at 64–227 (ITSRLKSNGR…STSVMIKLGK (164 aa)). Residue E92 is the Proton donor of the active site. E123 is an active-site residue.

This sequence belongs to the GCKR-like family. MurNAc-6-P etherase subfamily. In terms of assembly, homodimer.

The catalysed reaction is N-acetyl-D-muramate 6-phosphate + H2O = N-acetyl-D-glucosamine 6-phosphate + (R)-lactate. It functions in the pathway amino-sugar metabolism; N-acetylmuramate degradation. Functionally, specifically catalyzes the cleavage of the D-lactyl ether substituent of MurNAc 6-phosphate, producing GlcNAc 6-phosphate and D-lactate. This chain is N-acetylmuramic acid 6-phosphate etherase, found in Prochlorococcus marinus (strain NATL2A).